The primary structure comprises 181 residues: ATP synthase subunit delta (181 aa).

Belongs to the ATPase delta chain family. In terms of assembly, F-type ATPases have 2 components, F(1) - the catalytic core - and F(0) - the membrane proton channel. F(1) has five subunits: alpha(3), beta(3), gamma(1), delta(1), epsilon(1). F(0) has three main subunits: a(1), b(2) and c(10-14). The alpha and beta chains form an alternating ring which encloses part of the gamma chain. F(1) is attached to F(0) by a central stalk formed by the gamma and epsilon chains, while a peripheral stalk is formed by the delta and b chains.

Its subcellular location is the cell membrane. Its function is as follows. F(1)F(0) ATP synthase produces ATP from ADP in the presence of a proton or sodium gradient. F-type ATPases consist of two structural domains, F(1) containing the extramembraneous catalytic core and F(0) containing the membrane proton channel, linked together by a central stalk and a peripheral stalk. During catalysis, ATP synthesis in the catalytic domain of F(1) is coupled via a rotary mechanism of the central stalk subunits to proton translocation. In terms of biological role, this protein is part of the stalk that links CF(0) to CF(1). It either transmits conformational changes from CF(0) to CF(1) or is implicated in proton conduction. This is ATP synthase subunit delta from Mycoplasmoides gallisepticum (strain R(low / passage 15 / clone 2)) (Mycoplasma gallisepticum).